Consider the following 238-residue polypeptide: Phosphoribosylaminoimidazole-succinocarboxamide synthase (238 aa).

Belongs to the SAICAR synthetase family.

It carries out the reaction 5-amino-1-(5-phospho-D-ribosyl)imidazole-4-carboxylate + L-aspartate + ATP = (2S)-2-[5-amino-1-(5-phospho-beta-D-ribosyl)imidazole-4-carboxamido]succinate + ADP + phosphate + 2 H(+). The protein operates within purine metabolism; IMP biosynthesis via de novo pathway; 5-amino-1-(5-phospho-D-ribosyl)imidazole-4-carboxamide from 5-amino-1-(5-phospho-D-ribosyl)imidazole-4-carboxylate: step 1/2. The protein is Phosphoribosylaminoimidazole-succinocarboxamide synthase of Alcanivorax borkumensis (strain ATCC 700651 / DSM 11573 / NCIMB 13689 / SK2).